Reading from the N-terminus, the 473-residue chain is Notchless protein homolog (473 aa).

The tract at residues 9–91 (GKTVMCLLTD…VLTIVYQQQA (83 aa)) is ubiquitin-like (UBL) domain. WD repeat units lie at residues 107–146 (GHAE…PLFT), 149–188 (GHKN…LEGS), 192–236 (GHKK…SIIC), 239–277 (GHTL…LIRE), 313–354 (EKQK…QPKK), 358–399 (GHQQ…TVFR), 400–439 (GHVG…LKQD), and 442–473 (GHAD…LWKG). The short motif at 417–432 (LLSGSKDSTLKIWEIR) is the DWD box element.

The protein belongs to the NLE1/RSA4 family. Associates with the pre-60S ribosomal particle. Constitutively and ubiquitously expressed.

The protein resides in the nucleus. It is found in the nucleolus. Required for female gametophyte development. This Arabidopsis thaliana (Mouse-ear cress) protein is Notchless protein homolog.